We begin with the raw amino-acid sequence, 251 residues long: Adapter protein MecA (251 aa).

This sequence belongs to the MecA family. As to quaternary structure, homodimer.

Functionally, enables the recognition and targeting of unfolded and aggregated proteins to the ClpC protease or to other proteins involved in proteolysis. The sequence is that of Adapter protein MecA from Streptococcus agalactiae serotype Ia (strain ATCC 27591 / A909 / CDC SS700).